The following is a 1182-amino-acid chain: Tyrosine-protein kinase ABL2 (1182 aa).

Disordered regions lie at residues 1-47 (MGQQ…TGFN) and 60-80 (EDGF…HRPY). Residue Gly2 is the site of N-myristoyl glycine attachment. Residues 2-106 (GQQVGRVGEA…SKENLLGATE (105 aa)) form a CAP region. Residues 20-30 (RGIRGSSAARP) are compositionally biased toward low complexity. Ser97 carries the post-translational modification Phosphoserine. The SH3 domain occupies 107 to 167 (SDPNLFVALY…PSNYITPVNS (61 aa)). Residues Tyr116, Tyr161, Tyr174, Tyr185, Tyr218, and Tyr231 each carry the phosphotyrosine modification. The 91-residue stretch at 173-263 (WYHGPVSRSA…GLVTTLHYPA (91 aa)) folds into the SH2 domain. Phosphotyrosine; by ABL1 and autocatalysis is present on Tyr261. Tyr272 is subject to Phosphotyrosine; by autocatalysis. Phosphoserine is present on Ser275. Residues 288-539 (ITMKHKLGGG…PSFAETHQAF (252 aa)) enclose the Protein kinase domain. 294–302 (LGGGQYGEV) contacts ATP. Tyr299 and Tyr303 each carry phosphotyrosine. ATP-binding positions include Lys317 and 362 to 368 (EYMPYGN). Asp409 serves as the catalytic Proton acceptor. Residues 427-451 (DFGLSRLMTGDTYTAHAGAKFPIKW) carry the Kinase activation loop motif. Phosphotyrosine; by autocatalysis and SRC-type Tyr-kinases is present on Tyr439. Residue Tyr459 is modified to Phosphotyrosine. Tyr568 carries the phosphotyrosine; by autocatalysis modification. Positions 611-641 (IRGAQASSGSPALPRKQRDKSPSSLLEDAKE) are disordered. Phosphoserine occurs at positions 620, 631, and 633. Residue Asp647 is modified to Phosphotyrosine. Positions 654-674 (SSFMKKRNAPTPPKRSSSFRE) are disordered. Ser655 bears the Phosphoserine mark. A Nuclear localization signal motif is present at residues 658 to 660 (KKR). Phosphotyrosine is present on residues Ala662 and Arg668. A phosphoserine mark is found at Ser669, Ser670, and Ser671. 2 positions are modified to phosphotyrosine: Tyr683 and Tyr718. Tyr683 is subject to Phosphotyrosine; by autocatalysis. The segment at 694-930 (SLQHADGFSF…PVLPTTHNHK (237 aa)) is F-actin-binding. The disordered stretch occupies residues 763 to 794 (LRAGKPTASDDTSKPFPRSNSTSSMSSGLPEQ). Lys776 is modified (N6-acetyllysine). Residues 780 to 791 (RSNSTSSMSSGL) are compositionally biased toward polar residues. Ser783 carries the post-translational modification Phosphoserine. A Phosphothreonine modification is found at Thr800. Polar residues predominate over residues 807–823 (RSKLQLERTVSTSSQPE). The tract at residues 807–851 (RSKLQLERTVSTSSQPEENVDRANDMLPKKSEESAAPSRERPKAK) is disordered. Residues Ser817 and Ser820 each carry the phosphoserine modification. The span at 825 to 849 (NVDRANDMLPKKSEESAAPSRERPK) shows a compositional bias: basic and acidic residues. 2 positions are modified to phosphoserine: Ser915 and Ser936. The interval 964–1024 (HQVTSSGDKD…TSETQEGGKK (61 aa)) is disordered. Residues 1010–1019 (TAGQSTSETQ) show a composition bias toward polar residues. Residues 1020–1182 (EGGKKAALGA…VQEISDVVQR (163 aa)) are F-actin-binding.

Belongs to the protein kinase superfamily. Tyr protein kinase family. ABL subfamily. In terms of assembly, interacts with PSMA7. Interacts with CTTN. Found in a complex with ABL1, ABL2, CRK and UNC119; leading to the inhibition of CRK phosphorylation by ABL kinases. The cofactor is Mg(2+). Requires Mn(2+) as cofactor. Phosphorylated at Tyr-261 by ABL1 in response to oxidative stress. Phosphorylated by PDGFRB. In terms of processing, polyubiquitinated. Polyubiquitination of ABL2 leads to degradation. As to expression, widely expressed.

Its subcellular location is the cytoplasm. The protein resides in the cytoskeleton. It catalyses the reaction L-tyrosyl-[protein] + ATP = O-phospho-L-tyrosyl-[protein] + ADP + H(+). With respect to regulation, stabilized in the inactive form by an association between the SH3 domain and the SH2-TK linker region, interactions of the N-terminal cap, and contributions from an N-terminal myristoyl group and phospholipids. Activated by autophosphorylation as well as by SRC-family kinase-mediated phosphorylation. Activated by RIN1 binding to the SH2 and SH3 domains. Inhibited by imatinib mesylate (Gleevec) which is used for the treatment of chronic myeloid leukemia (CML). Phosphatidylinositol 4,5-bisphosphate (PIP2), a highly abundant phosphoinositide known to regulate cytoskeletal and membrane proteins, inhibits the tyrosine kinase activity. Functionally, non-receptor tyrosine-protein kinase that plays an ABL1-overlapping role in key processes linked to cell growth and survival such as cytoskeleton remodeling in response to extracellular stimuli, cell motility and adhesion and receptor endocytosis. Coordinates actin remodeling through tyrosine phosphorylation of proteins controlling cytoskeleton dynamics like MYH10 (involved in movement); CTTN (involved in signaling); or TUBA1 and TUBB (microtubule subunits). Binds directly F-actin and regulates actin cytoskeletal structure through its F-actin-bundling activity. Involved in the regulation of cell adhesion and motility through phosphorylation of key regulators of these processes such as CRK, CRKL, DOK1 or ARHGAP35. Adhesion-dependent phosphorylation of ARHGAP35 promotes its association with RASA1, resulting in recruitment of ARHGAP35 to the cell periphery where it inhibits RHO. Phosphorylates multiple receptor tyrosine kinases like PDGFRB and other substrates which are involved in endocytosis regulation such as RIN1. In brain, may regulate neurotransmission by phosphorylating proteins at the synapse. ABL2 also acts as a regulator of multiple pathological signaling cascades during infection. Pathogens can highjack ABL2 kinase signaling to reorganize the host actin cytoskeleton for multiple purposes, like facilitating intracellular movement and host cell exit. Finally, functions as its own regulator through autocatalytic activity as well as through phosphorylation of its inhibitor, ABI1. Positively regulates chemokine-mediated T-cell migration, polarization, and homing to lymph nodes and immune-challenged tissues, potentially via activation of NEDD9/HEF1 and RAP1. This chain is Tyrosine-protein kinase ABL2 (ABL2), found in Homo sapiens (Human).